Here is a 103-residue protein sequence, read N- to C-terminus: Large ribosomal subunit protein uL24 (103 aa).

This sequence belongs to the universal ribosomal protein uL24 family. Part of the 50S ribosomal subunit.

One of two assembly initiator proteins, it binds directly to the 5'-end of the 23S rRNA, where it nucleates assembly of the 50S subunit. In terms of biological role, one of the proteins that surrounds the polypeptide exit tunnel on the outside of the subunit. This Christiangramia forsetii (strain DSM 17595 / CGMCC 1.15422 / KT0803) (Gramella forsetii) protein is Large ribosomal subunit protein uL24.